We begin with the raw amino-acid sequence, 1192 residues long: Probable inactive serine/threonine-protein kinase DDB_G0280131 (1192 aa).

Disordered stretches follow at residues Ser-23 to Glu-90, Asp-144 to Asp-189, Val-201 to Ala-236, Ser-301 to Ser-406, and Asp-478 to Lys-499. A compositionally biased stretch (low complexity) spans Asn-26 to Asn-43. Over residues Ser-44 to Asn-60 the composition is skewed to polar residues. 2 stretches are compositionally biased toward low complexity: residues Ser-61 to Ala-73 and Ser-154 to Asn-175. The span at Val-201–Thr-232 shows a compositional bias: pro residues. Positions Ser-301 to Asn-324 are enriched in low complexity. Residues Lys-325–Thr-338 are compositionally biased toward polar residues. Residues Pro-362 to Gln-376 show a composition bias toward low complexity. The segment covering Pro-377–Pro-391 has biased composition (pro residues). Composition is skewed to low complexity over residues Thr-392–Thr-402 and Asn-485–Asn-498. The 263-residue stretch at Ala-521–His-783 folds into the Protein kinase domain. ATP-binding positions include Ile-527–Thr-535 and Lys-549. The tract at residues Lys-790–Val-831 is disordered. The span at Pro-791–Gln-828 shows a compositional bias: low complexity.

This sequence belongs to the protein kinase superfamily. TKL Ser/Thr protein kinase family.

This chain is Probable inactive serine/threonine-protein kinase DDB_G0280131, found in Dictyostelium discoideum (Social amoeba).